Here is a 55-residue protein sequence, read N- to C-terminus: Large ribosomal subunit protein bL33B (55 aa).

This sequence belongs to the bacterial ribosomal protein bL33 family.

This chain is Large ribosomal subunit protein bL33B (rpmG2), found in Mycobacterium tuberculosis (strain CDC 1551 / Oshkosh).